An 896-amino-acid polypeptide reads, in one-letter code: Translation initiation factor IF-2 (896 aa).

2 disordered regions span residues 53–81 (HGGE…SASK) and 117–301 (AEEA…ESMD). Over residues 60 to 79 (TKMTLQRKSVSTLSVGSGSA) the composition is skewed to polar residues. Over residues 117–227 (AEEAASKAKA…ESEKTGDHHV (111 aa)) the composition is skewed to basic and acidic residues. Residues 254–266 (ATPAPAAAPANTG) are compositionally biased toward low complexity. Over residues 273 to 282 (GKDNRRDSRN) the composition is skewed to basic and acidic residues. Over residues 283–294 (ARGGRNARNNRS) the composition is skewed to low complexity. Residues 394–563 (SRAPVVTIMG…LLEAEVLELK (170 aa)) enclose the tr-type G domain. The tract at residues 403 to 410 (GHVDHGKT) is G1. 403 to 410 (GHVDHGKT) provides a ligand contact to GTP. Residues 428–432 (GITQH) form a G2 region. Residues 449–452 (DTPG) form a G3 region. GTP is bound by residues 449 to 453 (DTPGH) and 503 to 506 (NKID). A G4 region spans residues 503–506 (NKID). The interval 539–541 (SAK) is G5.

It belongs to the TRAFAC class translation factor GTPase superfamily. Classic translation factor GTPase family. IF-2 subfamily.

The protein localises to the cytoplasm. In terms of biological role, one of the essential components for the initiation of protein synthesis. Protects formylmethionyl-tRNA from spontaneous hydrolysis and promotes its binding to the 30S ribosomal subunits. Also involved in the hydrolysis of GTP during the formation of the 70S ribosomal complex. This Shewanella sediminis (strain HAW-EB3) protein is Translation initiation factor IF-2.